We begin with the raw amino-acid sequence, 200 residues long: MLAFCRSSLKSKKYFIILLALAAIAGLGTHAAWSSNGLPRIDNKTLARLAQQHPVVVLFRHAERCDRSTNQCLSDKTGITVKGTQDARELGNAFSADIPDFDLYSSNTVRTIQSATWFSAGKKLTVDKRLLQCGNEIYSAIKNLQSKAPDKNIVIFTHNHCLTYIAKDKRDATFKPDYLDGLVMHVEKGKVYLDGEFVNH.

The signal sequence occupies residues 1–25; sequence MLAFCRSSLKSKKYFIILLALAAIA.

This sequence belongs to the phosphoglycerate mutase family. Ais subfamily.

The protein resides in the periplasm. It functions in the pathway bacterial outer membrane biogenesis; lipopolysaccharide metabolism. Catalyzes the dephosphorylation of heptose(II) of the outer membrane lipopolysaccharide core. In Escherichia coli O7:K1 (strain IAI39 / ExPEC), this protein is Lipopolysaccharide core heptose(II)-phosphate phosphatase.